The primary structure comprises 348 residues: Histidinol-phosphate aminotransferase (348 aa).

At Lys210 the chain carries N6-(pyridoxal phosphate)lysine.

It belongs to the class-II pyridoxal-phosphate-dependent aminotransferase family. Histidinol-phosphate aminotransferase subfamily. Homodimer. Pyridoxal 5'-phosphate serves as cofactor.

The catalysed reaction is L-histidinol phosphate + 2-oxoglutarate = 3-(imidazol-4-yl)-2-oxopropyl phosphate + L-glutamate. Its pathway is amino-acid biosynthesis; L-histidine biosynthesis; L-histidine from 5-phospho-alpha-D-ribose 1-diphosphate: step 7/9. This Cytophaga hutchinsonii (strain ATCC 33406 / DSM 1761 / CIP 103989 / NBRC 15051 / NCIMB 9469 / D465) protein is Histidinol-phosphate aminotransferase.